The chain runs to 132 residues: Small ribosomal subunit protein uS8 (132 aa).

Belongs to the universal ribosomal protein uS8 family. In terms of assembly, part of the 30S ribosomal subunit. Contacts proteins S5 and S12.

One of the primary rRNA binding proteins, it binds directly to 16S rRNA central domain where it helps coordinate assembly of the platform of the 30S subunit. The sequence is that of Small ribosomal subunit protein uS8 from Ehrlichia ruminantium (strain Welgevonden).